We begin with the raw amino-acid sequence, 330 residues long: 1-aminocyclopropane-1-carboxylate oxidase 2 (330 aa).

Residues 153–253 (PNFGTKVSNY…RMSIASFYNP (101 aa)) form the Fe2OG dioxygenase domain. 3 residues coordinate Fe cation: His177, Asp179, and His234.

The protein belongs to the iron/ascorbate-dependent oxidoreductase family. In terms of assembly, monomer. Requires Fe cation as cofactor.

The catalysed reaction is 1-aminocyclopropane-1-carboxylate + L-ascorbate + O2 = ethene + L-dehydroascorbate + hydrogen cyanide + CO2 + 2 H2O. It functions in the pathway alkene biosynthesis; ethylene biosynthesis via S-adenosyl-L-methionine; ethylene from S-adenosyl-L-methionine: step 2/2. The sequence is that of 1-aminocyclopropane-1-carboxylate oxidase 2 (ACO2) from Malus domestica (Apple).